The following is a 346-amino-acid chain: Probable alcohol dehydrogenase AdhA (346 aa).

Zn(2+)-binding residues include Cys-51, His-73, Cys-109, Cys-112, Cys-115, Cys-123, and Cys-165.

Belongs to the zinc-containing alcohol dehydrogenase family. Zn(2+) is required as a cofactor.

It carries out the reaction a primary alcohol + NAD(+) = an aldehyde + NADH + H(+). The catalysed reaction is a secondary alcohol + NAD(+) = a ketone + NADH + H(+). In Mycobacterium tuberculosis (strain CDC 1551 / Oshkosh), this protein is Probable alcohol dehydrogenase AdhA (adhA).